Here is a 153-residue protein sequence, read N- to C-terminus: Phosphatase NudJ (153 aa).

Residues 3–131 (KPHVTVACVV…LVAESIRCYQ (129 aa)) enclose the Nudix hydrolase domain. Positions 36 to 57 (GHLEADETLVEAAARELWEETG) match the Nudix box motif.

Belongs to the Nudix hydrolase family. NudJ subfamily. Monomer. It depends on Mg(2+) as a cofactor.

The polypeptide is Phosphatase NudJ (nudJ) (Shigella boydii serotype 4 (strain Sb227)).